The chain runs to 290 residues: Nitrogenase iron protein 2 (290 aa).

10-17 (GKGGIGKS) is a binding site for ATP. Cys-98 is a binding site for [4Fe-4S] cluster. Arg-101 is subject to ADP-ribosylarginine; by dinitrogenase reductase ADP-ribosyltransferase. Cys-133 contributes to the [4Fe-4S] cluster binding site.

The protein belongs to the NifH/BchL/ChlL family. Homodimer. Requires [4Fe-4S] cluster as cofactor. The reversible ADP-ribosylation of Arg-101 inactivates the nitrogenase reductase and regulates nitrogenase activity.

It carries out the reaction N2 + 8 reduced [2Fe-2S]-[ferredoxin] + 16 ATP + 16 H2O = H2 + 8 oxidized [2Fe-2S]-[ferredoxin] + 2 NH4(+) + 16 ADP + 16 phosphate + 6 H(+). The key enzymatic reactions in nitrogen fixation are catalyzed by the nitrogenase complex, which has 2 components: the iron protein (component 2) and a component 1 which is either a molybdenum-iron protein, a vanadium-iron, or an iron-iron protein. The chain is Nitrogenase iron protein 2 (vnfH) from Azotobacter chroococcum mcd 1.